The chain runs to 694 residues: Threonine--tRNA ligase (694 aa).

The 67-residue stretch at 8–74 (NFVNTSVTTH…EETATFTAVP (67 aa)) folds into the TGS domain. Residues 273-579 (DHRRLGTELD…LLEHYAGAFP (307 aa)) form a catalytic region. Positions 378, 429, and 556 each coordinate Zn(2+).

Belongs to the class-II aminoacyl-tRNA synthetase family. Homodimer. The cofactor is Zn(2+).

Its subcellular location is the cytoplasm. The enzyme catalyses tRNA(Thr) + L-threonine + ATP = L-threonyl-tRNA(Thr) + AMP + diphosphate + H(+). Catalyzes the attachment of threonine to tRNA(Thr) in a two-step reaction: L-threonine is first activated by ATP to form Thr-AMP and then transferred to the acceptor end of tRNA(Thr). Also edits incorrectly charged L-seryl-tRNA(Thr). This chain is Threonine--tRNA ligase, found in Corynebacterium efficiens (strain DSM 44549 / YS-314 / AJ 12310 / JCM 11189 / NBRC 100395).